A 227-amino-acid polypeptide reads, in one-letter code: Ribonuclease 3 (227 aa).

Residues 4–133 enclose the RNase III domain; sequence FETLEKLLSY…LIAAIYLDSN (130 aa). Glutamate 46 is a binding site for Mg(2+). Residue aspartate 50 is part of the active site. Residues asparagine 119 and glutamate 122 each contribute to the Mg(2+) site. The active site involves glutamate 122. The region spanning 158–226 is the DRBM domain; sequence DPKTALQEWA…ARSLLHRLKN (69 aa).

It belongs to the ribonuclease III family. As to quaternary structure, homodimer. Requires Mg(2+) as cofactor.

The protein resides in the cytoplasm. The catalysed reaction is Endonucleolytic cleavage to 5'-phosphomonoester.. Its function is as follows. Digests double-stranded RNA. Involved in the processing of primary rRNA transcript to yield the immediate precursors to the large and small rRNAs (23S and 16S). Processes some mRNAs, and tRNAs when they are encoded in the rRNA operon. Processes pre-crRNA and tracrRNA of type II CRISPR loci if present in the organism. The chain is Ribonuclease 3 from Rickettsia massiliae (strain Mtu5).